Here is a 185-residue protein sequence, read N- to C-terminus: Small ribosomal subunit protein uS5 (185 aa).

Residues 29 to 92 form the S5 DRBM domain; the sequence is LEEKVVKINR…EKAKKQLVRI (64 aa).

Belongs to the universal ribosomal protein uS5 family. In terms of assembly, part of the 30S ribosomal subunit. Contacts proteins S4 and S8.

In terms of biological role, with S4 and S12 plays an important role in translational accuracy. Its function is as follows. Located at the back of the 30S subunit body where it stabilizes the conformation of the head with respect to the body. The protein is Small ribosomal subunit protein uS5 of Aster yellows witches'-broom phytoplasma (strain AYWB).